Here is a 691-residue protein sequence, read N- to C-terminus: Elongation factor G (691 aa).

In terms of domain architecture, tr-type G spans 8–282; it reads EKTRNIGIMA…AVVDYLPSPV (275 aa). Residues 17-24, 81-85, and 135-138 contribute to the GTP site; these read AHIDAGKT, DTPGH, and NKMD.

The protein belongs to the TRAFAC class translation factor GTPase superfamily. Classic translation factor GTPase family. EF-G/EF-2 subfamily.

The protein localises to the cytoplasm. In terms of biological role, catalyzes the GTP-dependent ribosomal translocation step during translation elongation. During this step, the ribosome changes from the pre-translocational (PRE) to the post-translocational (POST) state as the newly formed A-site-bound peptidyl-tRNA and P-site-bound deacylated tRNA move to the P and E sites, respectively. Catalyzes the coordinated movement of the two tRNA molecules, the mRNA and conformational changes in the ribosome. This chain is Elongation factor G, found in Caldicellulosiruptor saccharolyticus (strain ATCC 43494 / DSM 8903 / Tp8T 6331).